The primary structure comprises 180 residues: Adenine phosphoribosyltransferase (180 aa).

The protein belongs to the purine/pyrimidine phosphoribosyltransferase family. In terms of assembly, homodimer.

Its subcellular location is the cytoplasm. It carries out the reaction AMP + diphosphate = 5-phospho-alpha-D-ribose 1-diphosphate + adenine. The protein operates within purine metabolism; AMP biosynthesis via salvage pathway; AMP from adenine: step 1/1. Functionally, catalyzes a salvage reaction resulting in the formation of AMP, that is energically less costly than de novo synthesis. In Agrobacterium fabrum (strain C58 / ATCC 33970) (Agrobacterium tumefaciens (strain C58)), this protein is Adenine phosphoribosyltransferase.